The following is a 170-amino-acid chain: MKTQRDGHSLGGWSLMLLLLGLLMPLAIVAQVLSYKEAVLRAIDGINQRSSDANLYRLLDLDPRPTMDGDPDTPKPVSFTVKETVCPRTTQQSPEDCDFKKDGLVKRCVGTVTLNQARDSFDISCDKDNRRFASLGNFFRKARKKIGEEFKRIVQRIKDFLQHLIPRTEA.

Positions 1–30 (MKTQRDGHSLGGWSLMLLLLGLLMPLAIVA) are cleaved as a signal peptide. Residues 31 to 131 (QVLSYKEAVL…DISCDKDNRR (101 aa)) constitute a propeptide, cathelin-like domain (CLD). Cystine bridges form between Cys86/Cys97 and Cys108/Cys125. Positions 150-162 (FKRIVQRIKDFLQ) are active core.

This sequence belongs to the cathelicidin family. As to quaternary structure, monomer, homodimer or homotrimer (in vitro). Oligomerizes as tetra- or hexamer in solution (in vitro). Post-translationally, proteolytically cleaved by proteinase PRTN3 into antibacterial peptide LL-37. Proteolytically cleaved by cathepsin CTSG and neutrophil elastase ELANE. In terms of processing, resistant to proteolytic degradation in solution, and when bound to both zwitterionic (mimicking mammalian membranes) and negatively charged membranes (mimicking bacterial membranes). After secretion onto the skin surface, the CAMP gene product is processed by a serine protease-dependent mechanism into multiple novel antimicrobial peptides distinct from and shorter than cathelicidin LL-37. These peptides show enhanced antimicrobial action, acquiring the ability to kill skin pathogens such as S.aureus, E.coli and C.albicans. These peptides have lost the ability to stimulate CXCL8/IL8 release from keratinocytes. The peptides act synergistically, killing bacteria at lower concentrations when present together, and maintain activity at increased salt condition.

It is found in the secreted. The protein localises to the vesicle. Antimicrobial protein that is an integral component of the innate immune system. Binds to bacterial lipopolysaccharides (LPS). Acts via neutrophil N-formyl peptide receptors to enhance the release of CXCL2. Postsecretory processing generates multiple cathelicidin antimicrobial peptides with various lengths which act as a topical antimicrobial defense in sweat on skin. The unprocessed precursor form, cathelicidin antimicrobial peptide, inhibits the growth of Gram-negative E.coli and E.aerogenes with efficiencies comparable to that of the mature peptide LL-37 (in vitro). Its function is as follows. Antimicrobial peptide that is an integral component of the innate immune system. Binds to bacterial lipopolysaccharides (LPS). Causes membrane permeabilization by forming transmembrane pores (in vitro). Causes lysis of E.coli. Exhibits antimicrobial activity against Gram-negative bacteria such as P.aeruginosa, S.typhimurium, E.aerogenes, E.coli and P.syringae, Gram-positive bacteria such as L.monocytogenes, S.epidermidis, S.pyogenes and S.aureus, as well as vancomycin-resistant enterococci (in vitro). Exhibits antimicrobial activity against methicillin-resistant S.aureus, P.mirabilis, and C.albicans in low-salt media, but not in media containing 100 mM NaCl (in vitro). Forms chiral supramolecular assemblies with quinolone signal (PQS) molecules of P.aeruginosa, which may lead to interference of bacterial quorum signaling and perturbance of bacterial biofilm formation. May form supramolecular fiber-like assemblies on bacterial membranes. Induces cytokine and chemokine producation as well as TNF/TNFA and CSF2/GMCSF production in normal human keratinocytes. Exhibits hemolytic activity against red blood cells. Functionally, exhibits antimicrobial activity against E.coli and B.megaterium (in vitro). The chain is Cathelicidin antimicrobial peptide from Hylobates moloch (Silvery gibbon).